The primary structure comprises 184 residues: Gastrokine-2 (184 aa).

The first 20 residues, 1 to 20, serve as a signal peptide directing secretion; it reads MKSLVAFLVVLSILRIQSQA. Residues 54–151 form the BRICHOS domain; the sequence is HSGSCSSTTI…LCKHIPLYEG (98 aa). A disulfide bridge links cysteine 81 with cysteine 143.

In terms of assembly, heterodimer with TFF1; disulfide linked. Interacts with TFF2.

The protein localises to the secreted. This chain is Gastrokine-2 (Gkn2), found in Rattus norvegicus (Rat).